The sequence spans 526 residues: Peptide chain release factor 3 (526 aa).

One can recognise a tr-type G domain in the interval Asn8–Gln277. GTP-binding positions include Ser17 to Thr24, Asp85 to His89, and Asn139 to Asp142.

The protein belongs to the TRAFAC class translation factor GTPase superfamily. Classic translation factor GTPase family. PrfC subfamily.

Its subcellular location is the cytoplasm. Its function is as follows. Increases the formation of ribosomal termination complexes and stimulates activities of RF-1 and RF-2. It binds guanine nucleotides and has strong preference for UGA stop codons. It may interact directly with the ribosome. The stimulation of RF-1 and RF-2 is significantly reduced by GTP and GDP, but not by GMP. In Histophilus somni (strain 129Pt) (Haemophilus somnus), this protein is Peptide chain release factor 3.